A 425-amino-acid chain; its full sequence is WD repeat-containing protein jip5 (425 aa).

5 WD repeats span residues 9-48, 72-111, 117-158, 221-262, and 318-355; these read PLSA…AASD, RHKG…VENK, EKNG…SKVS, ISST…DQDE, and DETE…ADRY. The segment at 40 to 63 is disordered; sequence LPTDEAASDDDETSNASSRNGRGH. Positions 358-425 are disordered; it reads MPGEKRMYGD…LDSMESSVVY (68 aa). Acidic residues predominate over residues 367–385; sequence DSDDSDEGDDSDDDSDDSD. The span at 395-404 shows a compositional bias: basic residues; the sequence is NKRKKTKAKG.

It belongs to the WD repeat WDR55 family.

Its subcellular location is the nucleus. The protein localises to the nucleolus. The chain is WD repeat-containing protein jip5 (jip5) from Aspergillus niger (strain ATCC MYA-4892 / CBS 513.88 / FGSC A1513).